A 458-amino-acid chain; its full sequence is Argininosuccinate lyase (458 aa).

Belongs to the lyase 1 family. Argininosuccinate lyase subfamily.

The protein resides in the cytoplasm. The enzyme catalyses 2-(N(omega)-L-arginino)succinate = fumarate + L-arginine. It participates in amino-acid biosynthesis; L-arginine biosynthesis; L-arginine from L-ornithine and carbamoyl phosphate: step 3/3. The polypeptide is Argininosuccinate lyase (Geotalea daltonii (strain DSM 22248 / JCM 15807 / FRC-32) (Geobacter daltonii)).